We begin with the raw amino-acid sequence, 79 residues long: Protein S100-G (79 aa).

The residue at position 2 (S2) is an N-acetylserine. EF-hand domains lie at 13 to 48 (IFEKYAAKEGDPDQLSKDELKLLIQAEFPSLLKGPN) and 45 to 79 (KGPNTLDDLFQELDKNGDGEVSFEEFQVLVKKISQ). Residues Q26 and E31 each contribute to the Ca(2+) site. At S42 the chain carries Phosphoserine. Residues D58, N60, D62, E64, and E69 each coordinate Ca(2+).

It belongs to the S-100 family.

This is Protein S100-G (S100G) from Homo sapiens (Human).